The sequence spans 342 residues: Dihydroorotase (342 aa).

Histidine 13 and histidine 15 together coordinate Zn(2+). Substrate-binding positions include 15 to 17 (HLR) and asparagine 41. Zn(2+)-binding residues include lysine 98, histidine 135, and histidine 173. Lysine 98 bears the N6-carboxylysine mark. A substrate-binding site is contributed by histidine 135. Position 218 (leucine 218) interacts with substrate. Aspartate 246 serves as a coordination point for Zn(2+). Aspartate 246 is a catalytic residue. Residues histidine 250 and alanine 262 each contribute to the substrate site.

The protein belongs to the metallo-dependent hydrolases superfamily. DHOase family. Class II DHOase subfamily. Homodimer. It depends on Zn(2+) as a cofactor.

The enzyme catalyses (S)-dihydroorotate + H2O = N-carbamoyl-L-aspartate + H(+). It participates in pyrimidine metabolism; UMP biosynthesis via de novo pathway; (S)-dihydroorotate from bicarbonate: step 3/3. Catalyzes the reversible cyclization of carbamoyl aspartate to dihydroorotate. In Vibrio campbellii (strain ATCC BAA-1116), this protein is Dihydroorotase.